The following is a 236-amino-acid chain: Large ribosomal subunit protein uL1 (236 aa).

The protein belongs to the universal ribosomal protein uL1 family. Part of the 50S ribosomal subunit.

In terms of biological role, binds directly to 23S rRNA. The L1 stalk is quite mobile in the ribosome, and is involved in E site tRNA release. Protein L1 is also a translational repressor protein, it controls the translation of the L11 operon by binding to its mRNA. The protein is Large ribosomal subunit protein uL1 of Corynebacterium jeikeium (strain K411).